Reading from the N-terminus, the 2213-residue chain is Sortilin-related receptor (2213 aa).

Positions 1–28 (MATRSSRRESRLPFLFTLVALLPPGALC) are cleaved as a signal peptide. Residues 29 to 81 (EVWTRTLHGGRAPLPQERGFRVVQGDPRELRLWERGDARGASRADEKPLRRRR) constitute a propeptide, removed in mature form. Positions 63–65 (RGD) match the Cell attachment site motif. The Lumenal portion of the chain corresponds to 82 to 2136 (SAALQPEPIK…MQAARSTDVA (2055 aa)). An N-linked (GlcNAc...) asparagine glycan is attached at asparagine 99. Serine 114 carries the post-translational modification Phosphoserine. A BNR 1 repeat occupies 136–147 (YVSYDYGKSFNK). Asparagine 158 carries N-linked (GlcNAc...) asparagine glycosylation. The stretch at 232 to 243 (WKSDDFGQTWIM) is one BNR 2 repeat. N-linked (GlcNAc...) asparagine glycans are attached at residues asparagine 368 and asparagine 430. BNR repeat units follow at residues 441 to 452 (VITFDKGGTWEF), 521 to 532 (YISSSAGARWRE), and 562 to 573 (KYSTNEGETWKA). Asparagine 616, asparagine 674, asparagine 817, and asparagine 870 each carry an N-linked (GlcNAc...) asparagine glycan. 5 LDL-receptor class B repeats span residues 799–842 (NCLY…EPLS), 843–886 (QLLY…VPQE), 887–929 (GIMF…SVDD), 930–971 (QWIY…FKNE), and 972–1012 (IYWD…FYKG). An EGF-like domain is found at 1025 to 1071 (CSLLCLPRANNSKSCRCPDGVASSVLPSGDLMCDCPKGYELKNNTCV). Asparagine 1034 and asparagine 1067 each carry an N-linked (GlcNAc...) asparagine glycan. 9 LDL-receptor class A domains span residues 1075-1113 (DTCL…NCPT), 1114-1154 (TICD…HCEM), 1155-1193 (HQCR…NCTA), 1196-1235 (HTCE…ANCE), 1237-1271 (KCNG…QHCE), 1272-1316 (PLCT…GCSR), 1322-1360 (KVCD…NCEN), 1365-1404 (PNCS…DCGD), and 1416-1454 (STCL…ACPS). Cystine bridges form between cysteine 1077–cysteine 1089, cysteine 1084–cysteine 1102, cysteine 1096–cysteine 1111, cysteine 1116–cysteine 1130, cysteine 1124–cysteine 1143, cysteine 1137–cysteine 1152, cysteine 1157–cysteine 1169, cysteine 1164–cysteine 1182, cysteine 1176–cysteine 1191, cysteine 1198–cysteine 1210, cysteine 1205–cysteine 1223, cysteine 1217–cysteine 1234, cysteine 1238–cysteine 1248, cysteine 1243–cysteine 1261, cysteine 1255–cysteine 1270, cysteine 1274–cysteine 1288, cysteine 1282–cysteine 1301, cysteine 1295–cysteine 1314, cysteine 1324–cysteine 1336, cysteine 1331–cysteine 1349, and cysteine 1343–cysteine 1358. Residue asparagine 1163 is glycosylated (N-linked (GlcNAc...) asparagine). An N-linked (GlcNAc...) asparagine glycan is attached at asparagine 1190. Residue asparagine 1245 is glycosylated (N-linked (GlcNAc...) asparagine). Asparagine 1366 is a glycosylation site (N-linked (GlcNAc...) asparagine). 6 disulfides stabilise this stretch: cysteine 1367-cysteine 1380, cysteine 1375-cysteine 1393, cysteine 1387-cysteine 1402, cysteine 1418-cysteine 1430, cysteine 1425-cysteine 1443, and cysteine 1437-cysteine 1452. Asparagine 1457 carries N-linked (GlcNAc...) asparagine glycosylation. LDL-receptor class A domains are found at residues 1468-1507 (GRCD…NCPT) and 1511-1550 (LTCM…ACSD). Intrachain disulfides connect cysteine 1470-cysteine 1483, cysteine 1477-cysteine 1496, cysteine 1490-cysteine 1505, cysteine 1513-cysteine 1526, cysteine 1520-cysteine 1539, and cysteine 1533-cysteine 1548. 6 consecutive Fibronectin type-III domains span residues 1556–1648 (KVQN…TPEG), 1652–1744 (APQN…TVKG), 1748–1843 (PPPN…VRPP), 1842–1926 (PPAP…VVKM), 1933–2028 (PPRH…APDA), and 2029–2117 (LKII…LYDE). Residues asparagine 1569, asparagine 1607, asparagine 1705, asparagine 1732, asparagine 1808, asparagine 1853, asparagine 1893, asparagine 1985, asparagine 2009, asparagine 2053, asparagine 2068, asparagine 2075, and asparagine 2091 are each glycosylated (N-linked (GlcNAc...) asparagine). The chain crosses the membrane as a helical span at residues 2137–2157 (AVVVPILFLILLSLGVGFAIL). Topologically, residues 2158-2213 (YTKHRRLQSSFTAFANSHYSSRLGSAIFSSGDDLGEDDEDAPMITGFSDDVPMVIA) are cytoplasmic. The short motif at 2160-2163 (KHRR) is the Potential nuclear localization signal for the C-terminal fragment generated by PSEN1 element. Residues 2171-2176 (FANSHY) carry the Endocytosis signal motif. The segment at 2189 to 2213 (DDLGEDDEDAPMITGFSDDVPMVIA) is required for efficient Golgi apparatus - endosome sorting. Residues 2200 to 2213 (MITGFSDDVPMVIA) form a required for interaction with GGA1 and GGA2 region. At serine 2205 the chain carries Phosphoserine; by ROCK2. The short motif at 2207–2211 (DVPMV) is the DXXLL motif involved in the interaction with GGA1 element.

Belongs to the VPS10-related sortilin family. SORL1 subfamily. As to quaternary structure, after maturation cleavage, interacts (via N-terminus) with its own propeptide; this interaction prevents interaction with other ligands, including CRLF1, GDNF, GFRA1, IL6 and IL6R. Interacts (via N-terminal ectodomain) with APP, forming a 1:1 stoichiometric complex; this interaction retains APP in the trans-Golgi network and reduces processing into soluble APP-alpha and amyloid-beta peptides. Also interacts with APP C-terminal fragment C99 and with Abeta40. Interacts with beta-secretase BACE1/BACE; this interaction may affect BACE1-binding to APP and hence reduce BACE1-dependent APP cleavage. Interacts with LRPAP1/RAP. Interacts (via C-terminal cytosolic domain) with GGA1 and GGA2 (via N-terminal VHS domain). Interacts with PACS1. May interact (via the N-terminal ectodomain) with the morphogenetic neuropeptide, also called head activator or HA; this interaction is impaired in the presence of propeptide. Interacts with neurotensin/NTS. Interacts (via the N-terminal ectodomain) with PDGFB homodimer. Interacts (via N-terminal ectodomain) with the uPA receptor PLAUR. Interacts with uPA/PLAU and PAI1/SERPINE1, either individually or in complex with each other, leading to endocytosis. Also interacts with PAI1/SERPINE1 in complex with tPA/PLAT. Interacts (via C-terminus) with AP-1 and AP-2 complexes. Interacts with BMPR1A and BMPR1B. Interacts with lipoprotein lipase LPL; this interaction is optimal in slightly acidic conditions. Interacts (via N-terminal ectodomain) with GDNF (via propeptide) and GDNF receptor alpha-1/GFRA1, either individually or in complex with each other. The interaction with GDNF occurs mostly intracellularly. Also interacts with other GDNF receptor alpha family members, including GFRA2, GFRA3 and GFRA4. Interacts with the insulin receptor INSR; this interaction strongly increases the surface exposure of INSR. Interacts (via cytosolic C-terminus) with STK39/SPAK. Interacts (via N-terminal ectodomain) with the heterodimeric complex CRLF1-CLC; within this complex, the interaction is mediated predominantly by the CRLF1 moiety. Interacts with CNTFR, as well as with the tripartite signaling complex formed by CRLF1, CLC and CNTFR. Interacts (via N-terminal ectodomain) with IL6; this interaction leads to IL6 internalization and lysosomal degradation. Binding of SOLRL1 secreted N-terminal ectodomain to IL6 may increase IL6 trans signaling. Interacts with secreted IL6R; this interaction leads to IL6R internalization. Also interacts with transmembrane IL6R; this interaction does not affect subcellular location. Interacts with APOE. Interacts with apolipoprotein E-rich beta-VLDL. Interacts with APOA5; this interaction leads to APOA5 internalization and is abolished by heparin. Interaction with APOA5 results in enhanced binding to chylomicrons. Interacts with ROCK2. Interacts (via cytosolic C-terminus) with PPP3CB/calcineurin A beta. Interacts with NTRK2/TRKB; this interaction facilitates NTRK2 trafficking between synaptic plasma membranes, postsynaptic densities and cell soma, hence positively regulates BDNF signaling. Interacts (via cytosolic C-terminus) with HSPA12A in an ADP-dependent manner; this interaction affects SORL1 internalization and subcellular localization. Interacts (via N-terminal ectodomain) with ERBB2/HER2. Within the Golgi apparatus, the propeptide may be cleaved off by FURIN or a furin-like protease. After cleavage, the propeptide interacts with the mature protein N-terminus, preventing the association with other ligands. At the cell surface, partially subjected to proteolytic shedding that releases the ectodomain in the extracellular milieu. The shedding may be catalyzed by ADAM17/TACE. Following shedding, PSEN1/presenilin-1 cleaves the remaining transmembrane fragment and catalyzes the release of a C-terminal fragment in the cytosol and of a soluble N-terminal beta fragment in the extracellular milieu. The C-terminal cytosolic fragment localizes to the nucleus. Post-translationally, phosphorylation at Ser-2205 facilitates the interaction with GGA1. As to expression, expressed in brain, in particular the hippocampus, dentate gyrus, and cerebral cortex (at protein level). Also detected in liver, adrenal glands, pancreas and testis. Expressed in smooth muscle cells, predominantly during proliferation.

It is found in the golgi apparatus membrane. The protein localises to the golgi apparatus. Its subcellular location is the trans-Golgi network membrane. The protein resides in the endosome membrane. It localises to the early endosome membrane. It is found in the recycling endosome membrane. The protein localises to the endoplasmic reticulum membrane. Its subcellular location is the endosome. The protein resides in the multivesicular body membrane. It localises to the cell membrane. It is found in the cytoplasmic vesicle. The protein localises to the secretory vesicle membrane. Its subcellular location is the secreted. Its function is as follows. Sorting receptor that directs several proteins to their correct location within the cell. Along with AP-1 complex, involved Golgi apparatus - endosome sorting. Sorting receptor for APP, regulating its intracellular trafficking and processing into amyloidogenic-beta peptides. Retains APP in the trans-Golgi network, hence preventing its transit through late endosomes where amyloid beta peptides Abeta40 and Abeta42 are generated. May also sort newly produced amyloid-beta peptides to lysosomes for catabolism. Does not affect APP trafficking from the endoplasmic reticulum to Golgi compartments. Sorting receptor for the BDNF receptor NTRK2/TRKB that facilitates NTRK2 trafficking between synaptic plasma membranes, postsynaptic densities and cell soma, hence positively regulates BDNF signaling by controlling the intracellular location of its receptor. Sorting receptor for GDNF that promotes GDNF regulated, but not constitutive secretion. Sorting receptor for the GDNF-GFRA1 complex, directing it from the cell surface to endosomes. GDNF is then targeted to lysosomes and degraded, while its receptor GFRA1 recycles back to the cell membrane, resulting in a GDNF clearance pathway. The SORL1-GFRA1 complex further targets RET for endocytosis, but not for degradation, affecting GDNF-induced neurotrophic activities. Sorting receptor for ERBB2/HER2. Regulates ERBB2 subcellular distribution by promoting its recycling after internalization from endosomes back to the plasma membrane, hence stimulating phosphoinositide 3-kinase (PI3K)-dependent ERBB2 signaling. Sorting receptor for lipoprotein lipase LPL. Promotes LPL localization to endosomes and later to the lysosomes, leading to degradation of newly synthesized LPL. Potential sorting receptor for APOA5, inducing APOA5 internalization to early endosomes, then to late endosomes, wherefrom a portion is sent to lysosomes and degradation, another portion is sorted to the trans-Golgi network. Sorting receptor for the insulin receptor INSR. Promotes recycling of internalized INSR via the Golgi apparatus back to the cell surface, thereby preventing lysosomal INSR catabolism, increasing INSR cell surface expression and strengthening insulin signal reception in adipose tissue. Does not affect INSR internalization. Plays a role in renal ion homeostasis, controlling the phospho-regulation of SLC12A1/NKCC2 by STK39/SPAK kinase and PPP3CB/calcineurin A beta phosphatase, possibly through intracellular sorting of STK39 and PPP3CB. Stimulates, via the N-terminal ectodomain, the proliferation and migration of smooth muscle cells, possibly by increasing cell surface expression of the urokinase receptor uPAR/PLAUR. This may promote extracellular matrix proteolysis and hence facilitate cell migration. By acting on the migration of intimal smooth muscle cells, may accelerate intimal thickening following vascular injury. Promotes adhesion of monocytes. Stimulates proliferation and migration of monocytes/macrophages. Through its action on intimal smooth muscle cells and macrophages, may accelerate intimal thickening and macrophage foam cell formation in the process of atherosclerosis. Regulates hypoxia-enhanced adhesion of hematopoietic stem and progenitor cells to the bone marrow stromal cells via a PLAUR-mediated pathway. This function is mediated by the N-terminal ectodomain. Metabolic regulator, which functions to maintain the adequate balance between lipid storage and oxidation in response to changing environmental conditions, such as temperature and diet. The N-terminal ectodomain negatively regulates adipose tissue energy expenditure, acting through the inhibition the BMP/Smad pathway. May regulate signaling by the heterodimeric neurotrophic cytokine CLCF1-CRLF1 bound to the CNTFR receptor by promoting the endocytosis of the tripartite complex CLCF1-CRLF1-CNTFR and lysosomal degradation. May regulate IL6 signaling, decreasing cis signaling, possibly by interfering with IL6-binding to membrane-bound IL6R, while up-regulating trans signaling via soluble IL6R. This chain is Sortilin-related receptor (SORL1), found in Oryctolagus cuniculus (Rabbit).